We begin with the raw amino-acid sequence, 217 residues long: Pyrophosphatase PpaX (217 aa).

Catalysis depends on D11, which acts as the Nucleophile.

This sequence belongs to the HAD-like hydrolase superfamily. PpaX family. Mg(2+) is required as a cofactor.

The catalysed reaction is diphosphate + H2O = 2 phosphate + H(+). Its function is as follows. Hydrolyzes pyrophosphate formed during P-Ser-HPr dephosphorylation by HPrK/P. Might play a role in controlling the intracellular pyrophosphate pool. The chain is Pyrophosphatase PpaX from Listeria welshimeri serovar 6b (strain ATCC 35897 / DSM 20650 / CCUG 15529 / CIP 8149 / NCTC 11857 / SLCC 5334 / V8).